The chain runs to 175 residues: Ferritin light chain (175 aa).

Ser2 bears the N-acetylserine mark. Residues 7–156 (QNYSTEVEAA…DHLTNLRRLS (150 aa)) form the Ferritin-like diiron domain. Fe cation-binding residues include Glu54, Glu57, Glu58, Glu61, and Glu64.

Belongs to the ferritin family. In terms of assembly, oligomer of 24 subunits. There are two types of subunits: L (light) chain and H (heavy) chain. The major chain can be light or heavy, depending on the species and tissue type. The functional molecule forms a roughly spherical shell with a diameter of 12 nm and contains a central cavity into which the insoluble mineral iron core is deposited. Interacts with NCOA4.

The protein localises to the cytoplasmic vesicle. The protein resides in the autophagosome. It localises to the cytoplasm. It is found in the autolysosome. Stores iron in a soluble, non-toxic, readily available form. Important for iron homeostasis. Iron is taken up in the ferrous form and deposited as ferric hydroxides after oxidation. Also plays a role in delivery of iron to cells. Mediates iron uptake in capsule cells of the developing kidney. Delivery to lysosomes by the cargo receptor NCOA4 for autophagic degradation and release or iron. This is Ferritin light chain (FTL) from Felis catus (Cat).